Here is a 307-residue protein sequence, read N- to C-terminus: uncharacterized protein (307 aa).

This is an uncharacterized protein from Bacillus subtilis (strain 168).